A 251-amino-acid polypeptide reads, in one-letter code: Hydroxyacylglutathione hydrolase (251 aa).

The Zn(2+) site is built by histidine 53, histidine 55, aspartate 57, histidine 58, histidine 110, aspartate 127, and histidine 165.

This sequence belongs to the metallo-beta-lactamase superfamily. Glyoxalase II family. Monomer. Zn(2+) serves as cofactor.

It carries out the reaction an S-(2-hydroxyacyl)glutathione + H2O = a 2-hydroxy carboxylate + glutathione + H(+). It participates in secondary metabolite metabolism; methylglyoxal degradation; (R)-lactate from methylglyoxal: step 2/2. In terms of biological role, thiolesterase that catalyzes the hydrolysis of S-D-lactoyl-glutathione to form glutathione and D-lactic acid. This chain is Hydroxyacylglutathione hydrolase, found in Salmonella arizonae (strain ATCC BAA-731 / CDC346-86 / RSK2980).